Consider the following 461-residue polypeptide: Major capsid protein (461 aa).

Positions 1-18 are enriched in polar residues; it reads MSTPTISADTTAQNATST. The interval 1–22 is disordered; the sequence is MSTPTISADTTAQNATSTEVRE.

Its subcellular location is the virion. Functionally, major protein of the capsid. This Spodoptera frugiperda ascovirus 1a (SfAV-1a) protein is Major capsid protein (MCP).